The following is a 289-amino-acid chain: Thiazole synthase (289 aa).

Lys132 (schiff-base intermediate with DXP) is an active-site residue. Residues Gly193, 219–220 (AG), and 241–242 (NT) contribute to the 1-deoxy-D-xylulose 5-phosphate site.

The protein belongs to the ThiG family. In terms of assembly, homotetramer. Forms heterodimers with either ThiH or ThiS.

It localises to the cytoplasm. The catalysed reaction is [ThiS sulfur-carrier protein]-C-terminal-Gly-aminoethanethioate + 2-iminoacetate + 1-deoxy-D-xylulose 5-phosphate = [ThiS sulfur-carrier protein]-C-terminal Gly-Gly + 2-[(2R,5Z)-2-carboxy-4-methylthiazol-5(2H)-ylidene]ethyl phosphate + 2 H2O + H(+). It participates in cofactor biosynthesis; thiamine diphosphate biosynthesis. Catalyzes the rearrangement of 1-deoxy-D-xylulose 5-phosphate (DXP) to produce the thiazole phosphate moiety of thiamine. Sulfur is provided by the thiocarboxylate moiety of the carrier protein ThiS. In vitro, sulfur can be provided by H(2)S. The protein is Thiazole synthase of Rhodospirillum rubrum (strain ATCC 11170 / ATH 1.1.1 / DSM 467 / LMG 4362 / NCIMB 8255 / S1).